Here is a 454-residue protein sequence, read N- to C-terminus: V-type ATP synthase subunit I 2 (454 aa).

Residues 101-121 (EREGDAPSVPRGKSSVAHDSA) form a disordered region. A run of 4 helical transmembrane segments spans residues 254–274 (LLFGIMFGDLGQGLLFFVLGL), 293–313 (VFLSVGFSSMVMGFLTGEFFA), 351–371 (MAFFGFTLFLGFVINSLGLII), and 424–444 (ACLSWVFFVKSFWSVCASVCV).

Belongs to the V-ATPase 116 kDa subunit family.

It localises to the cell membrane. Its function is as follows. Produces ATP from ADP in the presence of a proton gradient across the membrane. The sequence is that of V-type ATP synthase subunit I 2 (atpI2) from Treponema pallidum (strain Nichols).